The sequence spans 418 residues: L-rhamnose isomerase (418 aa).

Positions 262, 294, and 296 each coordinate Mn(2+).

Belongs to the rhamnose isomerase family. As to quaternary structure, homotetramer. Requires Mn(2+) as cofactor.

It localises to the cytoplasm. It carries out the reaction L-rhamnopyranose = L-rhamnulose. The protein operates within carbohydrate degradation; L-rhamnose degradation; glycerone phosphate from L-rhamnose: step 1/3. Functionally, catalyzes the interconversion of L-rhamnose and L-rhamnulose. This chain is L-rhamnose isomerase, found in Yersinia pseudotuberculosis serotype IB (strain PB1/+).